The primary structure comprises 97 residues: MDKIHLYDKILSPMVTEKTTNLSEQNKIVFKVPRAANKTNLKKNIEKIFKVNVTKINIINKQNRTKVARGKKVNVQGYKKAIITLKKGQSIDLTSGI.

This sequence belongs to the universal ribosomal protein uL23 family. In terms of assembly, part of the 50S ribosomal subunit. Contacts protein L29, and trigger factor when it is bound to the ribosome.

Its function is as follows. One of the early assembly proteins it binds 23S rRNA. One of the proteins that surrounds the polypeptide exit tunnel on the outside of the ribosome. Forms the main docking site for trigger factor binding to the ribosome. The polypeptide is Large ribosomal subunit protein uL23 (Pelagibacter ubique (strain HTCC1062)).